The primary structure comprises 548 residues: DNA ligase (548 aa).

Residue glutamate 252 participates in ATP binding. The N6-AMP-lysine intermediate role is filled by lysine 254. ATP is bound by residues arginine 259, arginine 274, glutamate 303, phenylalanine 343, arginine 414, and lysine 420.

This sequence belongs to the ATP-dependent DNA ligase family. It depends on Mg(2+) as a cofactor.

The catalysed reaction is ATP + (deoxyribonucleotide)n-3'-hydroxyl + 5'-phospho-(deoxyribonucleotide)m = (deoxyribonucleotide)n+m + AMP + diphosphate.. Its function is as follows. DNA ligase that seals nicks in double-stranded DNA during DNA replication, DNA recombination and DNA repair. This chain is DNA ligase, found in Natronomonas pharaonis (strain ATCC 35678 / DSM 2160 / CIP 103997 / JCM 8858 / NBRC 14720 / NCIMB 2260 / Gabara) (Halobacterium pharaonis).